We begin with the raw amino-acid sequence, 324 residues long: MARRGKKKGRPISGWVIFDKPKGMGSTEAVSKIKWLFSAEKAGHAGTLDPLASGMLPIALGEATKTVPYVMDGTKVYRFTVTWGEERSTDDLEGQPTKTSDKRPSREEVEALLPDYTGVISQVPPQFSAIKIDGERAYDLAREGETVEIPAREVEIDRLEIVGFPDADRTEFEVECSKGTYVRSLARDMGRDLGCYGHISDLRRVEVAPFTDEDMVTLAKLEAVWPPLPPKDEDGNVIEPAPRRDFSALDALVIDTGAALDCLPQVPLSDDQAQRVRLGNPVILRGRDAPLEADEACVTTRGKLLAIGYIEHGQFKPKRVFTAG.

D49 functions as the Nucleophile in the catalytic mechanism. The tract at residues 87 to 107 (RSTDDLEGQPTKTSDKRPSRE) is disordered.

The protein belongs to the pseudouridine synthase TruB family. Type 1 subfamily.

It carries out the reaction uridine(55) in tRNA = pseudouridine(55) in tRNA. Responsible for synthesis of pseudouridine from uracil-55 in the psi GC loop of transfer RNAs. The polypeptide is tRNA pseudouridine synthase B (Brucella abortus (strain 2308)).